The following is a 267-amino-acid chain: 2-keto-3-deoxy-L-rhamnonate aldolase (267 aa).

Catalysis depends on His-49, which acts as the Proton acceptor. Gln-151 lines the substrate pocket. Glu-153 provides a ligand contact to Mg(2+). The substrate site is built by Ala-178 and Asp-179. Asp-179 is a binding site for Mg(2+).

Belongs to the HpcH/HpaI aldolase family. KDR aldolase subfamily. As to quaternary structure, homohexamer. The cofactor is Mg(2+).

It carries out the reaction 2-dehydro-3-deoxy-L-rhamnonate = (S)-lactaldehyde + pyruvate. Catalyzes the reversible retro-aldol cleavage of 2-keto-3-deoxy-L-rhamnonate (KDR) to pyruvate and lactaldehyde. This is 2-keto-3-deoxy-L-rhamnonate aldolase from Klebsiella pneumoniae subsp. pneumoniae (strain ATCC 700721 / MGH 78578).